A 338-amino-acid chain; its full sequence is Glycerol-3-phosphate dehydrogenase [NAD(P)+] (338 aa).

NADPH contacts are provided by Ser-13, Trp-14, and Lys-108. Sn-glycerol 3-phosphate is bound by residues Lys-108, Gly-139, and Ser-141. Ala-143 contacts NADPH. Sn-glycerol 3-phosphate is bound by residues Lys-194, Asp-247, Ser-257, Arg-258, and Asn-259. Lys-194 functions as the Proton acceptor in the catalytic mechanism. NADPH is bound at residue Arg-258. NADPH contacts are provided by Val-282 and Glu-284.

It belongs to the NAD-dependent glycerol-3-phosphate dehydrogenase family.

It is found in the cytoplasm. It carries out the reaction sn-glycerol 3-phosphate + NAD(+) = dihydroxyacetone phosphate + NADH + H(+). The enzyme catalyses sn-glycerol 3-phosphate + NADP(+) = dihydroxyacetone phosphate + NADPH + H(+). Its pathway is membrane lipid metabolism; glycerophospholipid metabolism. Functionally, catalyzes the reduction of the glycolytic intermediate dihydroxyacetone phosphate (DHAP) to sn-glycerol 3-phosphate (G3P), the key precursor for phospholipid synthesis. The polypeptide is Glycerol-3-phosphate dehydrogenase [NAD(P)+] (Streptococcus agalactiae serotype III (strain NEM316)).